Here is a 932-residue protein sequence, read N- to C-terminus: Eukaryotic translation initiation factor 3 subunit A (932 aa).

Positions 309–492 (KPATANFVIL…NSISFSSDLF (184 aa)) constitute a PCI domain. A phosphoserine mark is found at serine 374 and serine 501. Positions 537-862 (LRKQQAEAAY…DEEISRKLAE (326 aa)) form a coiled coil. Basic and acidic residues predominate over residues 793 to 865 (AEEEAARAAE…ISRKLAEKAA (73 aa)). Positions 793–932 (AEEEAARAAE…PPSRRNQQQQ (140 aa)) are disordered. 3 positions are modified to phosphoserine: serine 874, serine 875, and serine 877. Positions 877 to 893 (SPGAWRRGGASAGGVSR) are enriched in low complexity.

The protein belongs to the eIF-3 subunit A family. Component of the eukaryotic translation initiation factor 3 (eIF-3) complex. The eIF-3 complex appears to include tif32/eif3a, SPAC25G10.08/eif3b, tif33/eif3c, SPBC4C3.07/eif3f, tif35/eif3g and sum1/eif3i. This set of common subunits may also associate exclusively with either moe1/eif3d and int6/eif3e, or with SPAC821.05/eif3h and SPAC1751.03/eif3m. The eIF-3 complex may also include SPAC3A12.13c/eif3j.

It localises to the cytoplasm. Functionally, RNA-binding component of the eukaryotic translation initiation factor 3 (eIF-3) complex, which is involved in protein synthesis of a specialized repertoire of mRNAs and, together with other initiation factors, stimulates binding of mRNA and methionyl-tRNAi to the 40S ribosome. The eIF-3 complex specifically targets and initiates translation of a subset of mRNAs involved in cell proliferation. This Schizosaccharomyces pombe (strain 972 / ATCC 24843) (Fission yeast) protein is Eukaryotic translation initiation factor 3 subunit A (tif32).